A 479-amino-acid polypeptide reads, in one-letter code: Acyltransferase easC (479 aa).

H161 (proton acceptor) is an active-site residue.

The protein belongs to the plant acyltransferase family. Monomer.

It participates in antibiotic biosynthesis. Functionally, acyltransferase; part of the gene cluster that mediates the biosynthesis of emericellamides, secondary metabolites acting as antibiotics. The biosynthesis of emericellamides initiates from the highly reducing polyketide synthase easB which catalyzes the formation of the linear polyketide chain. EasB produces several polyketides that can be further processed by the downstream enzymes. The polyketides are released from easB as linear polyketide carboxylic acids, which are converted to CoA thioesters by the acyl-CoA ligase easD. The substrates are then loaded onto the acyltransferase easC, which shuttles them to the first thiolation (T) domain of the nonribosomal peptide synthetase easA. EasA then performs condensation of the polyketides with one glycine, two alanine, one valine and one leucine residues. A last step of cyclization leads to the production of emericellamides. The protein is Acyltransferase easC of Emericella nidulans (strain FGSC A4 / ATCC 38163 / CBS 112.46 / NRRL 194 / M139) (Aspergillus nidulans).